The chain runs to 229 residues: DNA mismatch repair protein MutH (229 aa).

It belongs to the MutH family.

The protein localises to the cytoplasm. In terms of biological role, sequence-specific endonuclease that cleaves unmethylated GATC sequences. It is involved in DNA mismatch repair. This is DNA mismatch repair protein MutH from Shigella boydii serotype 18 (strain CDC 3083-94 / BS512).